An 869-amino-acid chain; its full sequence is AP-3 complex subunit delta (869 aa).

Serine 2 is subject to N-acetylserine. HEAT repeat units lie at residues 33-70, 107-142, 143-179, 180-216, 218-254, 292-329, and 330-366; these read NFISRAVEEIRREIKATDLSTKSTALHKLSYLAALHGV, SVMLLITNQVRKDLNSANEYEVSLALECLSRIGTHD, LARDLTPEVFTLLGSSKSFVKKKAIGVVLRVFEKYHD, AVKVCFKRLVENLETSDPQILSAVVGVFCELATKDPQ, CLPLAPEFYKVLVDSRNNWVLIKVLKIFAKLALIEPR, AAVKLAVAKIREFLVEDDPNLKYLGLNALSIVAPKHLW, and AVLENKEVVVKAMSDEDPNVKLEALHLLMAMVNEDNV. The tract at residues 738 to 869 is disordered; the sequence is ISQDSFNPKR…EQVIIPDFLL (132 aa). Positions 769–780 are enriched in polar residues; sequence ITPQAKTNIQTA. The span at 815 to 830 shows a compositional bias: basic and acidic residues; sequence QEKEESSRIENHQNSE. Basic residues predominate over residues 831–850; that stretch reads KKKKKKKKKKGEGSSKHKSR.

This sequence belongs to the adaptor complexes large subunit family. Adaptor protein complex 3 (AP-3) is a heterotetramer composed of two large adaptins (delta-type subunit and beta-type subunit), a medium adaptin (mu-type subunit) and a small adaptin (sigma-type subunit). Binds to EPSIN2.

It is found in the cytoplasm. It localises to the golgi apparatus membrane. Part of the AP-3 complex, an adaptor-related complex which seems to be clathrin-associated. The complex is associated with the Golgi region as well as more peripheral structures. It facilitates the budding of vesicles from the Golgi membrane and may be directly involved in trafficking to the vacuole. It also function in maintaining the identity of lytic vacuoles and in regulating the transition between storage and lytic vacuoles. The sequence is that of AP-3 complex subunit delta (DELTA-ADR) from Arabidopsis thaliana (Mouse-ear cress).